Consider the following 251-residue polypeptide: ATP synthase subunit a (251 aa).

Helical transmembrane passes span 14 to 34, 78 to 98, 107 to 127, 174 to 194, and 196 to 216; these read GFVKLNGTIIYTWLLMLLLAV, YLPFLGTLFVFVAVANLFAVF, SLSTTVALAICVFVAVPFYGI, MILAIMLIITPFIFPVVMGVL, and LLIGGVQAYIFSILATVYIAA. The interval 224–251 is disordered; the sequence is NAGASDDEGGEDAKSACAAGGKICKHKP.

Belongs to the ATPase A chain family. In terms of assembly, F-type ATPases have 2 components, CF(1) - the catalytic core - and CF(0) - the membrane proton channel. CF(1) has five subunits: alpha(3), beta(3), gamma(1), delta(1), epsilon(1). CF(0) has three main subunits: a(1), b(2) and c(9-12). The alpha and beta chains form an alternating ring which encloses part of the gamma chain. CF(1) is attached to CF(0) by a central stalk formed by the gamma and epsilon chains, while a peripheral stalk is formed by the delta and b chains.

Its subcellular location is the cell inner membrane. Its function is as follows. Key component of the proton channel; it plays a direct role in the translocation of protons across the membrane. In Nitrosospira multiformis (strain ATCC 25196 / NCIMB 11849 / C 71), this protein is ATP synthase subunit a.